Consider the following 635-residue polypeptide: UvrABC system protein C (635 aa).

The segment covering 1 to 14 (MAQNHMSETMNDIS) has biased composition (polar residues). Residues 1–27 (MAQNHMSETMNDISAESPDQPEPPRTG) are disordered. The GIY-YIG domain occupies 40–117 (SSPGVYRMLD…IKQLKPKYNV (78 aa)). The UVR domain occupies 227–262 (TKIQEELGAEMQAASEAMEYERAAALRDRIKALTQV).

Belongs to the UvrC family. In terms of assembly, interacts with UvrB in an incision complex.

The protein localises to the cytoplasm. Functionally, the UvrABC repair system catalyzes the recognition and processing of DNA lesions. UvrC both incises the 5' and 3' sides of the lesion. The N-terminal half is responsible for the 3' incision and the C-terminal half is responsible for the 5' incision. This Ruegeria sp. (strain TM1040) (Silicibacter sp.) protein is UvrABC system protein C.